A 442-amino-acid polypeptide reads, in one-letter code: Syndecan-3 (442 aa).

Disordered stretches follow at residues 1-25 (MKPG…GPGA) and 55-85 (RPVD…SGYF). The N-terminal stretch at 1–44 (MKPGPPRRGTAQGQRVDTATHGPGARGLLLPPLLLLLLAGRAAG) is a signal peptide. Topologically, residues 45–387 (AQRWRNENFE…SILERKEVLV (343 aa)) are extracellular. Positions 61 to 75 (GSGDDDSFPDDELDD) are enriched in acidic residues. O-linked (Xyl...) (glycosaminoglycan) serine glycans are attached at residues serine 78, serine 80, serine 82, and serine 89. O-linked (GalNAc) threonine; by GALNT13 glycosylation is present at threonine 107. Disordered stretches follow at residues 151–175 (EEPS…TGAP), 180–199 (APAT…PATA), 225–244 (ATTP…DTEA), 252–327 (TATS…TTQP), and 339–372 (AAAK…SSAA). The segment covering 157-175 (ATTISTTTSTTAATTTGAP) has biased composition (low complexity). Residue serine 161 is glycosylated (O-linked (GalNAc) serine; by GALNT13). O-linked (GalNAc) threonine; by GALNT13 glycosylation is found at threonine 162, threonine 163, threonine 170, and threonine 172. The segment covering 276-287 (TLPLGTTAPGPT) has biased composition (low complexity). Over residues 289–303 (VAQTPTPESLLTTTQ) the composition is skewed to polar residues. 2 O-linked (Xyl...) (glycosaminoglycan) serine glycosylation sites follow: serine 315 and serine 367. Residues 388 to 408 (AVIVGGVVGALFAAFLVTLLI) form a helical membrane-spanning segment. Tyrosine 409, tyrosine 419, tyrosine 431, and tyrosine 441 each carry phosphotyrosine. The Cytoplasmic segment spans residues 409–442 (YRMKKKDEGSYTLEEPKQASVTYQKPDKQEEFYA). A disordered region spans residues 419-442 (YTLEEPKQASVTYQKPDKQEEFYA). Positions 433 to 442 (KPDKQEEFYA) are enriched in basic and acidic residues.

The protein belongs to the syndecan proteoglycan family. Interacts with TIAM1. Interacts (via heparan sulfate chains) with PTN; this interaction mediates the neurite outgrowth-promoting signal from PTN to the cytoskeleton of growing neurites; this interaction mediates osteoblast recruitment. Interacts with MDK; this interaction induces SDC3 clustering; this interaction induces neuronal cell adhesion and neurite outgrowth. Post-translationally, O-glycosylated within the Thr/Ser-rich region which could interact with lectin domains on other molecules. High levels in neonatal brain, heart, and Schwann cells, barely detectable in neonatal or adult liver, or adult brain.

It localises to the cell membrane. Cell surface proteoglycan that may bear heparan sulfate. May have a role in the organization of cell shape by affecting the actin cytoskeleton, possibly by transferring signals from the cell surface in a sugar-dependent mechanism. The polypeptide is Syndecan-3 (Sdc3) (Rattus norvegicus (Rat)).